The chain runs to 273 residues: Rhamnulose-1-phosphate aldolase (273 aa).

Residue E117 is part of the active site. Zn(2+) contacts are provided by H140, H142, and H211.

The protein belongs to the aldolase class II family. RhaD subfamily. The cofactor is Zn(2+).

Its subcellular location is the cytoplasm. It catalyses the reaction L-rhamnulose 1-phosphate = (S)-lactaldehyde + dihydroxyacetone phosphate. It participates in carbohydrate degradation; L-rhamnose degradation; glycerone phosphate from L-rhamnose: step 3/3. Catalyzes the reversible cleavage of L-rhamnulose-1-phosphate to dihydroxyacetone phosphate (DHAP) and L-lactaldehyde. This chain is Rhamnulose-1-phosphate aldolase, found in Listeria monocytogenes serovar 1/2a (strain ATCC BAA-679 / EGD-e).